The sequence spans 95 residues: Co-chaperonin GroES (95 aa).

The protein belongs to the GroES chaperonin family. As to quaternary structure, heptamer of 7 subunits arranged in a ring. Interacts with the chaperonin GroEL.

The protein resides in the cytoplasm. Together with the chaperonin GroEL, plays an essential role in assisting protein folding. The GroEL-GroES system forms a nano-cage that allows encapsulation of the non-native substrate proteins and provides a physical environment optimized to promote and accelerate protein folding. GroES binds to the apical surface of the GroEL ring, thereby capping the opening of the GroEL channel. The chain is Co-chaperonin GroES from Rhodobacter capsulatus (Rhodopseudomonas capsulata).